The chain runs to 1060 residues: Valine--tRNA ligase, mitochondrial (1060 aa).

The transit peptide at 1-15 (MPHLPLASFRPPLWG) directs the protein to the mitochondrion. A disordered region spans residues 25–50 (PQALCTQPEPHGSPVSRRNREAKQKR). Positions 146 to 156 (PNVTGSLHIGH) match the 'HIGH' region motif. K548 is modified (N6-acetyllysine). Positions 659–663 (KMSKS) match the 'KMSKS' region motif. K662 is an ATP binding site.

The protein belongs to the class-I aminoacyl-tRNA synthetase family.

It localises to the mitochondrion. It carries out the reaction tRNA(Val) + L-valine + ATP = L-valyl-tRNA(Val) + AMP + diphosphate. Its function is as follows. Catalyzes the attachment of valine to tRNA(Val) in a two-step reaction: valine is first activated by ATP to form Val-AMP and then transferred to the acceptor end of tRNA(Val). In Mus musculus (Mouse), this protein is Valine--tRNA ligase, mitochondrial (Vars2).